A 300-amino-acid polypeptide reads, in one-letter code: 11-beta-hydroxysteroid dehydrogenase 1 (300 aa).

The Cytoplasmic segment spans residues 1–7; sequence MAFLKKY. Residues 8–24 form a helical; Signal-anchor for type II membrane protein membrane-spanning segment; that stretch reads LLTILMVFLAYYYYSAN. Residues 25–300 lie on the Lumenal side of the membrane; the sequence is EKFRPEMLQG…SNEKLYGRWA (276 aa). NADP(+) is bound by residues 41–67, 92–93, and 119–123; these read GASKGIGREIAYHLAKMGAHVVVTARS, SM, and NHVLY. Position 170 (Ser170) interacts with substrate. Residue Tyr183 is the Proton acceptor of the active site. 183 to 187 contributes to the NADP(+) binding site; the sequence is YSASK. An N-linked (GlcNAc...) asparagine glycan is attached at Asn207. 218 to 222 is a binding site for NADP(+); that stretch reads IDTET.

The protein belongs to the short-chain dehydrogenases/reductases (SDR) family. In terms of assembly, homodimer. In terms of tissue distribution, widely expressed in all peripheral tissues, with highest expression in liver, followed by kidney and lung, and very low expression in heart, lung, spleen, stomach, small intestine, colon, skin, skeletal muscle, and ovary.

It is found in the endoplasmic reticulum membrane. It catalyses the reaction an 11beta-hydroxysteroid + NADP(+) = an 11-oxosteroid + NADPH + H(+). The catalysed reaction is cortisone + NADPH + H(+) = cortisol + NADP(+). It carries out the reaction corticosterone + NADP(+) = 11-dehydrocorticosterone + NADPH + H(+). The enzyme catalyses a 7beta-hydroxysteroid + NADP(+) = a 7-oxosteroid + NADPH + H(+). It catalyses the reaction 7-oxocholesterol + NADPH + H(+) = 7beta-hydroxycholesterol + NADP(+). The catalysed reaction is chenodeoxycholate + NADP(+) = 7-oxolithocholate + NADPH + H(+). It carries out the reaction 7-oxolithocholate + NADPH + H(+) = ursodeoxycholate + NADP(+). The enzyme catalyses glycochenodeoxycholate + NADP(+) = 7-oxoglycolithocholate + NADPH + H(+). It catalyses the reaction taurochenodeoxycholate + NADP(+) = 7-oxotaurolithocholate + NADPH + H(+). The catalysed reaction is tauroursodeoxycholate + NADP(+) = 7-oxotaurolithocholate + NADPH + H(+). It carries out the reaction glycoursodeoxycholate + NADP(+) = 7-oxoglycolithocholate + NADPH + H(+). The enzyme catalyses 7-oxopregnenolone + NADPH + H(+) = 7beta-hydroxypregnenolone + NADP(+). It catalyses the reaction 3beta,7alpha-dihydroxyandrost-5-en-17-one + NADP(+) = 3beta-hydroxy-5-androstene-7,17-dione + NADPH + H(+). The catalysed reaction is 3beta-hydroxy-5-androstene-7,17-dione + NADPH + H(+) = 3beta,7beta-dihydroxyandrost-5-en-17-one + NADP(+). It carries out the reaction 3beta-hydroxy-5alpha-androstane-7,17-dione + NADPH + H(+) = 3beta,7beta-dihydroxy-5alpha-androstan-17-one + NADP(+). Functionally, controls the reversible conversion of biologically active glucocorticoids such as cortisone to cortisol, and 11-dehydrocorticosterone to corticosterone in the presence of NADP(H). Participates in the corticosteroid receptor-mediated anti-inflammatory response, as well as metabolic and homeostatic processes. Bidirectional in vitro, predominantly functions as a reductase in vivo, thereby increasing the concentration of active glucocorticoids. It has broad substrate specificity, besides glucocorticoids, it accepts other steroid and sterol substrates. Interconverts 7-oxo- and 7-hydroxy-neurosteroids such as 7-oxopregnenolone and 7beta-hydroxypregnenolone, 7-oxodehydroepiandrosterone (3beta-hydroxy-5-androstene-7,17-dione) and 7beta-hydroxydehydroepiandrosterone (3beta,7beta-dihydroxyandrost-5-en-17-one), among others. Catalyzes the stereo-specific conversion of the major dietary oxysterol, 7-ketocholesterol (7-oxocholesterol), into the more polar 7-beta-hydroxycholesterol metabolite. 7-oxocholesterol is one of the most important oxysterols, it participates in several events such as induction of apoptosis, accumulation in atherosclerotic lesions, lipid peroxidation, and induction of foam cell formation. Mediates the 7-oxo reduction of 7-oxolithocholate mainly to chenodeoxycholate, and to a lesser extent to ursodeoxycholate, both in its free form and when conjugated to glycine or taurine, providing a link between glucocorticoid activation and bile acid metabolism. Catalyzes the synthesis of 7-beta-25-dihydroxycholesterol from 7-oxo-25-hydroxycholesterol in vitro, which acts as a ligand for the G-protein-coupled receptor (GPCR) Epstein-Barr virus-induced gene 2 (EBI2) and may thereby regulate immune cell migration. This Cavia porcellus (Guinea pig) protein is 11-beta-hydroxysteroid dehydrogenase 1 (HSD11B1).